The primary structure comprises 158 residues: Regulator of sigma D (158 aa).

The protein belongs to the Rsd/AlgQ family. As to quaternary structure, interacts with RpoD.

The protein localises to the cytoplasm. Functionally, binds RpoD and negatively regulates RpoD-mediated transcription activation by preventing the interaction between the primary sigma factor RpoD with the catalytic core of the RNA polymerase and with promoter DNA. May be involved in replacement of the RNA polymerase sigma subunit from RpoD to RpoS during the transition from exponential growth to the stationary phase. This chain is Regulator of sigma D, found in Shigella dysenteriae serotype 1 (strain Sd197).